Here is a 90-residue protein sequence, read N- to C-terminus: Probable Fe(2+)-trafficking protein (90 aa).

The protein belongs to the Fe(2+)-trafficking protein family.

Its function is as follows. Could be a mediator in iron transactions between iron acquisition and iron-requiring processes, such as synthesis and/or repair of Fe-S clusters in biosynthetic enzymes. This is Probable Fe(2+)-trafficking protein from Pasteurella multocida (strain Pm70).